Here is a 359-residue protein sequence, read N- to C-terminus: Methyltransferase fsa4 (359 aa).

S-adenosyl-L-methionine contacts are provided by residues Gly198–Gly199, Asp224, Ser248–Phe249, Arg264, and Arg265.

It belongs to the class I-like SAM-binding methyltransferase superfamily. Cation-independent O-methyltransferase family.

Its pathway is mycotoxin biosynthesis. Methyltransferase; part of the gene cluster that mediates the biosynthesis of HIV-1 integrase inhibitor equisetin and of fusarisetin A, both trans-fused decalin-containing tetramic acids showing also antimicrobial activity. The PKS module of fsa1 together with the enoylreductase fsa3 catalyze the formation of the polyketide unit which is then conjugated to L-serine by the condensation domain of the fsa1 NRPS module. Activity of the Dieckmann cyclase domain (RED) results in release of the Dieckmann product intermediate. Diels-Alderase fsa2 is involved in endo-selective Diels-Alder cycloaddition to form the decalin ring, leading to the production of N-desmethylequisetin also called trichosetin. Subsequent N-methylation is carried out by fsa4 to give equisetin. The enzymatic gene responsible for the conversion of equisetin to fusarisetin A has not been identified yet and is probably located outside of the fsa cluster. In Fusarium sp. (strain FN080326), this protein is Methyltransferase fsa4.